The chain runs to 262 residues: Ribosomal RNA small subunit methyltransferase A (262 aa).

6 residues coordinate S-adenosyl-L-methionine: Asn-13, Leu-15, Gly-40, Glu-61, Asp-85, and Asn-105.

The protein belongs to the class I-like SAM-binding methyltransferase superfamily. rRNA adenine N(6)-methyltransferase family. RsmA subfamily.

Its subcellular location is the cytoplasm. The catalysed reaction is adenosine(1518)/adenosine(1519) in 16S rRNA + 4 S-adenosyl-L-methionine = N(6)-dimethyladenosine(1518)/N(6)-dimethyladenosine(1519) in 16S rRNA + 4 S-adenosyl-L-homocysteine + 4 H(+). Specifically dimethylates two adjacent adenosines (A1518 and A1519) in the loop of a conserved hairpin near the 3'-end of 16S rRNA in the 30S particle. May play a critical role in biogenesis of 30S subunits. This is Ribosomal RNA small subunit methyltransferase A from Laribacter hongkongensis (strain HLHK9).